Consider the following 474-residue polypeptide: UDP-N-acetylmuramate--L-alanine ligase (474 aa).

112-118 contacts ATP; the sequence is GTHGKTT.

This sequence belongs to the MurCDEF family.

It is found in the cytoplasm. It carries out the reaction UDP-N-acetyl-alpha-D-muramate + L-alanine + ATP = UDP-N-acetyl-alpha-D-muramoyl-L-alanine + ADP + phosphate + H(+). Its pathway is cell wall biogenesis; peptidoglycan biosynthesis. Functionally, cell wall formation. This is UDP-N-acetylmuramate--L-alanine ligase from Cupriavidus taiwanensis (strain DSM 17343 / BCRC 17206 / CCUG 44338 / CIP 107171 / LMG 19424 / R1) (Ralstonia taiwanensis (strain LMG 19424)).